Consider the following 130-residue polypeptide: Small ribosomal subunit protein uS11c (130 aa).

Belongs to the universal ribosomal protein uS11 family. In terms of assembly, part of the 30S ribosomal subunit.

It localises to the plastid. The protein localises to the chloroplast. The sequence is that of Small ribosomal subunit protein uS11c from Tetradesmus obliquus (Green alga).